Reading from the N-terminus, the 537-residue chain is Interleukin-2 receptor subunit beta (537 aa).

A signal peptide spans 1–26 (MATVDLSWRLPLYILLLLLATTWVSA). Over 27-239 (AVNDCSHLKC…FRTRPADPKE (213 aa)) the chain is Extracellular. A disulfide bridge connects residues C36 and C46. N-linked (GlcNAc...) asparagine glycosylation is found at N43, N55, and N71. Residues C74 and C86 are joined by a disulfide bond. In terms of domain architecture, Fibronectin type-III spans 135-235 (APHSLQVLHI…QPMAFRTRPA (101 aa)). N150 carries an N-linked (GlcNAc...) asparagine glycan. Residues 221 to 225 (WSPWS) carry the WSXWS motif motif. A helical transmembrane segment spans residues 240 to 267 (IFPLPWLRCLLLVLGCFFGFLSCVCVLV). The Cytoplasmic segment spans residues 268–537 (KCRYLGPWLK…LQAQDSAHLI (270 aa)). The Box 1 motif signature appears at 280-288 (LKCHIPDPS). 2 disordered regions span residues 442 to 466 (AYGNSITPEERPPLSLQEGLPSLAS) and 479 to 498 (ELGDDGEGMSTNSSGQQASV). A compositionally biased stretch (polar residues) spans 487 to 497 (MSTNSSGQQAS).

Belongs to the type I cytokine receptor family. Type 4 subfamily. As to quaternary structure, non-covalent dimer of an alpha and a beta subunit. IL2R exists in 3 different forms: a high affinity dimer, an intermediate affinity monomer (beta subunit), and a low affinity monomer (alpha subunit). The high and intermediate affinity forms also associate with a gamma subunit. Interacts with SHB upon interleukin stimulation.

It localises to the cell membrane. The protein resides in the cell surface. Functionally, receptor for interleukin-2. This beta subunit is involved in receptor mediated endocytosis and transduces the mitogenic signals of IL2. Probably in association with IL15RA, involved in the stimulation of neutrophil phagocytosis by IL15. This chain is Interleukin-2 receptor subunit beta (Il2rb), found in Rattus norvegicus (Rat).